A 414-amino-acid chain; its full sequence is Translation initiation factor 2 subunit gamma (414 aa).

Positions 8–206 (QPEVNIGVVG…AIEKFIPTPP (199 aa)) constitute a tr-type G domain. Positions 17–24 (GHVDHGKT) are G1. Mg(2+) is bound by residues Asp-20, Thr-24, Gly-45, and Thr-47. GTP is bound at residue 20-25 (DHGKTT). A G2 region spans residues 45–49 (GMTIK). 4 residues coordinate Zn(2+): Cys-60, Cys-63, Cys-75, and Cys-77. Residues 93–96 (DAPG) form a G3 region. Residues 149-152 (NKVD) and 184-186 (SAL) contribute to the GTP site. The tract at residues 149–152 (NKVD) is G4. The interval 184 to 186 (SAL) is G5.

The protein belongs to the TRAFAC class translation factor GTPase superfamily. Classic translation factor GTPase family. EIF2G subfamily. Heterotrimer composed of an alpha, a beta and a gamma chain. Mg(2+) serves as cofactor.

It catalyses the reaction GTP + H2O = GDP + phosphate + H(+). In terms of biological role, eIF-2 functions in the early steps of protein synthesis by forming a ternary complex with GTP and initiator tRNA. The polypeptide is Translation initiation factor 2 subunit gamma (Aeropyrum pernix (strain ATCC 700893 / DSM 11879 / JCM 9820 / NBRC 100138 / K1)).